Here is a 427-residue protein sequence, read N- to C-terminus: Putative F-box protein At3g44060 (427 aa).

In terms of domain architecture, F-box spans 1–46 (MDCLPDDLLVQILYLLPTKEAVSTSVLSKRWRTLFTRSDNLDFHDP).

This is Putative F-box protein At3g44060 from Arabidopsis thaliana (Mouse-ear cress).